Reading from the N-terminus, the 749-residue chain is Soluble starch synthase 2-1, chloroplastic/amyloplastic (749 aa).

A chloroplast-targeting transit peptide spans 1–44 (MAAAAVSSLLAPSGSCYSPGCHSCWGPGPGGGRRLPSPRRRPIT). Lys272 contributes to the ADP-alpha-D-glucose binding site.

Belongs to the glycosyltransferase 1 family. Bacterial/plant glycogen synthase subfamily. As to expression, expressed in endosperm, leaves, and weakly in roots.

It localises to the plastid. It is found in the amyloplast. The protein localises to the chloroplast. The enzyme catalyses [(1-&gt;4)-alpha-D-glucosyl](n) + ADP-alpha-D-glucose = [(1-&gt;4)-alpha-D-glucosyl](n+1) + ADP + H(+). It functions in the pathway glycan biosynthesis; starch biosynthesis. Functionally, may be involved in starch synthesis in endosperm amyloplasts and contribute to the deposition of transient starch in chloroplasts of leaves. This Oryza sativa subsp. japonica (Rice) protein is Soluble starch synthase 2-1, chloroplastic/amyloplastic (SSII-1).